The following is a 181-amino-acid chain: ATP synthase subunit delta (181 aa).

It belongs to the ATPase delta chain family. F-type ATPases have 2 components, F(1) - the catalytic core - and F(0) - the membrane proton channel. F(1) has five subunits: alpha(3), beta(3), gamma(1), delta(1), epsilon(1). CF(0) has four main subunits: a(1), b(1), b'(1) and c(10-14). The alpha and beta chains form an alternating ring which encloses part of the gamma chain. F(1) is attached to F(0) by a central stalk formed by the gamma and epsilon chains, while a peripheral stalk is formed by the delta, b and b' chains.

It localises to the cellular thylakoid membrane. Functionally, f(1)F(0) ATP synthase produces ATP from ADP in the presence of a proton or sodium gradient. F-type ATPases consist of two structural domains, F(1) containing the extramembraneous catalytic core and F(0) containing the membrane proton channel, linked together by a central stalk and a peripheral stalk. During catalysis, ATP synthesis in the catalytic domain of F(1) is coupled via a rotary mechanism of the central stalk subunits to proton translocation. In terms of biological role, this protein is part of the stalk that links CF(0) to CF(1). It either transmits conformational changes from CF(0) to CF(1) or is implicated in proton conduction. This chain is ATP synthase subunit delta, found in Synechococcus sp. (strain RCC307).